Reading from the N-terminus, the 104-residue chain is UPF0134 protein MPN_104 (104 aa).

Belongs to the UPF0134 family.

The protein is UPF0134 protein MPN_104 of Mycoplasma pneumoniae (strain ATCC 29342 / M129 / Subtype 1) (Mycoplasmoides pneumoniae).